Consider the following 344-residue polypeptide: MPMQGAQRKLLGSLNSTPTATSNPGLAANHTGAPCLEVSIPDGLFLSLGLVSLVENVLVVAAIAKNRNLHSSMYXFICCLALSDLLVSGSNMLETAIILLLEAGTLATRASVVQQLHNTIDVLTCSSMLCSLCFLGAIAVDRYISIFYALRYHSIMTLPRAQRAIAAIWVASVLSSTLFITYYDHAAVLLCLVVFFLAMLVLMAVLYVHMLARACQHAQGIIRLHNRQLPAHKGFGLRGAATLTILLGIFFLCWGPFFLHLTLVVFCPQHLTCNCIFKNFKVFLTLIICNTIIDPLIYAFRSQELRRTLKEVLLCSSWPGCWAEGGGDSVWPGSCVTLRGPLPP.

Residues 1–37 (MPMQGAQRKLLGSLNSTPTATSNPGLAANHTGAPCLE) are Extracellular-facing. Residue Asn29 is glycosylated (N-linked (GlcNAc...) asparagine). A helical membrane pass occupies residues 38–63 (VSIPDGLFLSLGLVSLVENVLVVAAI). Over 64–72 (AKNRNLHSS) the chain is Cytoplasmic. A helical transmembrane segment spans residues 73-93 (MYXFICCLALSDLLVSGSNML). Topologically, residues 94-118 (ETAIILLLEAGTLATRASVVQQLHN) are extracellular. Residues 119-140 (TIDVLTCSSMLCSLCFLGAIAV) traverse the membrane as a helical segment. The Cytoplasmic segment spans residues 141-163 (DRYISIFYALRYHSIMTLPRAQR). The helical transmembrane segment at 164–183 (AIAAIWVASVLSSTLFITYY) threads the bilayer. The Extracellular segment spans residues 184–191 (DHAAVLLC). A helical transmembrane segment spans residues 192–211 (LVVFFLAMLVLMAVLYVHML). Topologically, residues 212 to 240 (ARACQHAQGIIRLHNRQLPAHKGFGLRGA) are cytoplasmic. A helical membrane pass occupies residues 241–266 (ATLTILLGIFFLCWGPFFLHLTLVVF). The Extracellular segment spans residues 267 to 279 (CPQHLTCNCIFKN). A helical membrane pass occupies residues 280-300 (FKVFLTLIICNTIIDPLIYAF). Residues 301 to 344 (RSQELRRTLKEVLLCSSWPGCWAEGGGDSVWPGSCVTLRGPLPP) are Cytoplasmic-facing. Residue Cys315 is the site of S-palmitoyl cysteine attachment.

Belongs to the G-protein coupled receptor 1 family. As to quaternary structure, interacts with MGRN1, but does not undergo MGRN1-mediated ubiquitination; this interaction competes with GNAS-binding and thus inhibits agonist-induced cAMP production. Interacts with OPN3; the interaction results in a decrease in MC1R-mediated cAMP signaling and ultimately a decrease in melanin production in melanocytes.

The protein localises to the cell membrane. Functionally, receptor for MSH (alpha, beta and gamma) and ACTH. The activity of this receptor is mediated by G proteins which activate adenylate cyclase. Mediates melanogenesis, the production of eumelanin (black/brown) and phaeomelanin (red/yellow), via regulation of cAMP signaling in melanocytes. This Callithrix geoffroyi (Geoffroy's marmoset) protein is Melanocyte-stimulating hormone receptor (MC1R).